The chain runs to 228 residues: Tumor necrosis factor receptor superfamily member 18 (228 aa).

A signal peptide spans 1–19; that stretch reads MGAWAMLYGVSMLCVLDLG. Topologically, residues 20 to 153 are extracellular; that stretch reads QPSVVEEPGC…EPLPTEQYGH (134 aa). 3 TNFR-Cys repeats span residues 28–61, 62–101, and 102–142; these read GCGPGKVQNGSGNNTRCCSLYAPGKEDCPKERCI, CVTPEYHCGDPQCKICKHYPCQPGQRVESQGDIVFGFRCV, and ACAM…AVCI. Disulfide bonds link Cys29-Cys44, Cys62-Cys74, Cys69-Cys82, Cys103-Cys122, and Cys116-Cys141. Residues Asn36 and Asn40 are each glycosylated (N-linked (GlcNAc...) asparagine). Asn121 and Asn134 each carry an N-linked (GlcNAc...) asparagine glycan. Residues 154 to 174 traverse the membrane as a helical segment; sequence LTVIFLVMAACIFFLTTVQLG. Topologically, residues 175–228 are cytoplasmic; sequence LHIWQLRRQHMCPRETQPFAEVQLSAEDACSFQFPEEERGEQTEEKCHLGGRWP.

As to quaternary structure, binds to TRAF1, TRAF2, and TRAF3, but not TRAF5 and TRAF6. Binds through its C-terminus to SIVA1/SIVA. In terms of tissue distribution, preferentially expressed in activated T lymphocytes.

It localises to the cell membrane. The protein resides in the secreted. Its function is as follows. Receptor for TNFSF18. Seems to be involved in interactions between activated T-lymphocytes and endothelial cells and in the regulation of T-cell receptor-mediated cell death. Mediated NF-kappa-B activation via the TRAF2/NIK pathway. This Mus musculus (Mouse) protein is Tumor necrosis factor receptor superfamily member 18 (Tnfrsf18).